The sequence spans 612 residues: Dihydroxy-acid dehydratase (612 aa).

Residue D81 coordinates Mg(2+). C122 lines the [2Fe-2S] cluster pocket. Mg(2+) contacts are provided by D123 and K124. Residue K124 is modified to N6-carboxylysine. [2Fe-2S] cluster is bound at residue C193. A Mg(2+)-binding site is contributed by E489. Residue S515 is the Proton acceptor of the active site.

Belongs to the IlvD/Edd family. Homodimer. [2Fe-2S] cluster is required as a cofactor. It depends on Mg(2+) as a cofactor.

It carries out the reaction (2R)-2,3-dihydroxy-3-methylbutanoate = 3-methyl-2-oxobutanoate + H2O. It catalyses the reaction (2R,3R)-2,3-dihydroxy-3-methylpentanoate = (S)-3-methyl-2-oxopentanoate + H2O. Its pathway is amino-acid biosynthesis; L-isoleucine biosynthesis; L-isoleucine from 2-oxobutanoate: step 3/4. The protein operates within amino-acid biosynthesis; L-valine biosynthesis; L-valine from pyruvate: step 3/4. Functions in the biosynthesis of branched-chain amino acids. Catalyzes the dehydration of (2R,3R)-2,3-dihydroxy-3-methylpentanoate (2,3-dihydroxy-3-methylvalerate) into 2-oxo-3-methylpentanoate (2-oxo-3-methylvalerate) and of (2R)-2,3-dihydroxy-3-methylbutanoate (2,3-dihydroxyisovalerate) into 2-oxo-3-methylbutanoate (2-oxoisovalerate), the penultimate precursor to L-isoleucine and L-valine, respectively. The chain is Dihydroxy-acid dehydratase from Teredinibacter turnerae (strain ATCC 39867 / T7901).